Consider the following 225-residue polypeptide: UPF0758 protein NGK_1225 (225 aa).

An MPN domain is found at 102–224; it reads TLSDPDTVAD…VRSFRQLGLM (123 aa). Residues His173, His175, and Asp186 each contribute to the Zn(2+) site. A JAMM motif motif is present at residues 173 to 186; sequence HNHPGGSPEPSQED.

It belongs to the UPF0758 family.

The polypeptide is UPF0758 protein NGK_1225 (Neisseria gonorrhoeae (strain NCCP11945)).